The chain runs to 505 residues: Flagellin (505 aa).

This sequence belongs to the bacterial flagellin family.

It is found in the secreted. The protein resides in the bacterial flagellum. Functionally, flagellin is the subunit protein which polymerizes to form the filaments of bacterial flagella. This is Flagellin (fliC) from Salmonella dublin.